Here is a 595-residue protein sequence, read N- to C-terminus: MFS-type efflux pump MFS2 (595 aa).

Asn-62 is a glycosylation site (N-linked (GlcNAc...) asparagine). 12 consecutive transmembrane segments (helical) span residues 69 to 89 (WSIT…SSAY), 106 to 126 (VITL…LIWA), 136 to 156 (LLFF…AGSP), 166 to 186 (FFAG…IADM), 197 to 217 (GIFA…GGFL), 225 to 245 (WVEG…SIFL), 301 to 321 (PIVL…YMLF), 336 to 356 (PGIG…AMVI), 381 to 401 (LPVA…FAWT), 409 to 429 (IVSI…FLSL), 442 to 462 (ASVL…FPLF), and 478 to 498 (IPAF…IYGA).

This sequence belongs to the major facilitator superfamily. DHA1 family. Polyamines/proton antiporter (TC 2.A.1.2.16) subfamily.

Its subcellular location is the cell membrane. MFS-type efflux pump involved in the modulation susceptibility to fluconazole and voriconazole, 2 azoles with similar molecular structure. This chain is MFS-type efflux pump MFS2, found in Trichophyton rubrum (strain ATCC MYA-4607 / CBS 118892) (Athlete's foot fungus).